The following is a 165-amino-acid chain: MTLEEFSAAEQKTERMDTVGDALEEVLSKARSQRTITVGVYEAAKLLNVDPDNVVLCLLAADEDDDRDVALQIHFTLIQAFCCENDINILRVSNPGRLAELLLLESDAGPAESGGASQPPDLHCVLVTNPHSSQWKDPALSQLICFCRESRYMDQWVPVINLPER.

Thr2 bears the Phosphothreonine mark.

The protein belongs to the GADD45 family. Interacts with AURKA, PCNA, GADD45GIP1 and MAPK14.

Its subcellular location is the nucleus. In terms of biological role, might affect PCNA interaction with some CDK (cell division protein kinase) complexes; stimulates DNA excision repair in vitro and inhibits entry of cells into S phase. In T-cells, functions as a regulator of p38 MAPKs by inhibiting p88 phosphorylation and activity. The sequence is that of Growth arrest and DNA damage-inducible protein GADD45 alpha (GADD45A) from Cricetulus griseus (Chinese hamster).